We begin with the raw amino-acid sequence, 145 residues long: Ribonuclease H (145 aa).

The 142-residue stretch at 2–143 (SKKEVIIYTD…ADSLARKAII (142 aa)) folds into the RNase H type-1 domain. 4 residues coordinate Mg(2+): D11, E49, D71, and D135.

This sequence belongs to the RNase H family. In terms of assembly, monomer. Requires Mg(2+) as cofactor.

Its subcellular location is the cytoplasm. It carries out the reaction Endonucleolytic cleavage to 5'-phosphomonoester.. Its function is as follows. Endonuclease that specifically degrades the RNA of RNA-DNA hybrids. The protein is Ribonuclease H of Wolbachia pipientis wMel.